Consider the following 341-residue polypeptide: Short chain dehydrogenase virL (341 aa).

NADP(+) contacts are provided by leucine 49, lysine 74, aspartate 97, asparagine 123, tyrosine 210, and lysine 214. Tyrosine 210 acts as the Proton donor in catalysis. Lysine 214 acts as the Lowers pKa of active site Tyr in catalysis.

Belongs to the short-chain dehydrogenases/reductases (SDR) family.

It participates in secondary metabolite biosynthesis. Functionally, short chain dehydrogenase; part of the gene cluster that mediates the biosynthesis of virensols and trichoxide, fungal natural products that contain or are derived from a salicylaldehyde core. The pathway begins with the synthesis of the reduced chain in virensol C by the highly reducing polyketide synthase virA via condensation of one acetate and 8 malonate units. VirA has interesting programming rules since the first 2 ketides are fully reduced, the 3 following ketides undergo beta-dehydration, and the last 3 ketides are only reduced to beta-hydroxys to yield the trihydroxy portion. The production of aldehyde virensol C by virA alone is surprising, since virA does not contain a reductase (R) domain that is typically associated with reductive product release in HRPKS. The cupin-domain enzyme virC is involved in enhancing virA product turnover. The short-chain dehydrogenase virB then oxidizes the C-7 alcohol of virensol C to a ketone, yielding virensol D. Virensol D is further transformed to salicylaldehyde 5-deoxyaurocitrin by the short-chain dehydrogenase virD. VirD catalyzes the dehydrogenation of C-3 to form the beta-ketone aldehyde, which is followed by the generation of the nucleophilic C-2 that is required for the intramolecular aldol condensation between C-2 and C-7, itself followed by dehydration and aromatization which leads to salicylaldehyde 5-deoxyaurocitrin. While the dehydrogenation of virensol D is definitely catalyzed by virD, the aldol condensation and dehydration may be uncatalyzed or assisted by virD. The short chain dehydrogenase virG then converts salicylaldehyde 5-deoxyaurocitrin into virensol B which is further hydroxylated by the cytochrome P450 monooxygenase virE to yield the hydroquinone virensol A. VirI then may oxidize virensol A to form the quinone, while virH performs the epoxidation. Finally, the two remaining short-chain dehydrogenases, virK and virL, are probably responsible for reducing the ketones to the corresponding alcohols to furnish the epoxycyclohexanol structure in trichoxide. This Hypocrea virens (strain Gv29-8 / FGSC 10586) (Gliocladium virens) protein is Short chain dehydrogenase virL.